Here is a 261-residue protein sequence, read N- to C-terminus: Cytochrome c oxidase subunit 3 (261 aa).

At 1–15 (MAHQAHAYHMVDPSP) the chain is on the mitochondrial matrix side. The chain crosses the membrane as a helical span at residues 16 to 34 (WPLTGAVAALLLTSGLAIW). Over 35 to 40 (FPFNSL) the chain is Mitochondrial intermembrane. The chain crosses the membrane as a helical span at residues 41-66 (ILLTLGLVLLLLTMYQWWRDIVREGT). Residues 67 to 72 (FQGHHT) lie on the Mitochondrial matrix side of the membrane. A helical membrane pass occupies residues 73 to 105 (PPVQKGLRYGMILFITSEVFFFLGFFWAFYHSS). Over 106–128 (LAPTPELGGCWPPTGIVPLNPFE) the chain is Mitochondrial intermembrane. A helical membrane pass occupies residues 129–152 (VPLLNTAVLLASGVTVTWAHHSIM). Topologically, residues 153–155 (EGE) are mitochondrial matrix. The chain crosses the membrane as a helical span at residues 156 to 183 (RKQAIHSLTLTILLGFYFTFLQAMEYYE). At 184 to 190 (APFTIAD) the chain is on the mitochondrial intermembrane side. Residues 191-223 (GVYGSTFFVATGFHGLHVIIGSTFLAICLLRQI) traverse the membrane as a helical segment. Topologically, residues 224–232 (RYHFTSEHH) are mitochondrial matrix. The chain crosses the membrane as a helical span at residues 233 to 256 (FGFEAAAWYWHFVDVVWLFLYISI). Residues 257 to 261 (YWWGS) are Mitochondrial intermembrane-facing.

The protein belongs to the cytochrome c oxidase subunit 3 family. As to quaternary structure, component of the cytochrome c oxidase (complex IV, CIV), a multisubunit enzyme composed of 14 subunits. The complex is composed of a catalytic core of 3 subunits MT-CO1, MT-CO2 and MT-CO3, encoded in the mitochondrial DNA, and 11 supernumerary subunits COX4I, COX5A, COX5B, COX6A, COX6B, COX6C, COX7A, COX7B, COX7C, COX8 and NDUFA4, which are encoded in the nuclear genome. The complex exists as a monomer or a dimer and forms supercomplexes (SCs) in the inner mitochondrial membrane with NADH-ubiquinone oxidoreductase (complex I, CI) and ubiquinol-cytochrome c oxidoreductase (cytochrome b-c1 complex, complex III, CIII), resulting in different assemblies (supercomplex SCI(1)III(2)IV(1) and megacomplex MCI(2)III(2)IV(2)).

It localises to the mitochondrion inner membrane. It carries out the reaction 4 Fe(II)-[cytochrome c] + O2 + 8 H(+)(in) = 4 Fe(III)-[cytochrome c] + 2 H2O + 4 H(+)(out). Functionally, component of the cytochrome c oxidase, the last enzyme in the mitochondrial electron transport chain which drives oxidative phosphorylation. The respiratory chain contains 3 multisubunit complexes succinate dehydrogenase (complex II, CII), ubiquinol-cytochrome c oxidoreductase (cytochrome b-c1 complex, complex III, CIII) and cytochrome c oxidase (complex IV, CIV), that cooperate to transfer electrons derived from NADH and succinate to molecular oxygen, creating an electrochemical gradient over the inner membrane that drives transmembrane transport and the ATP synthase. Cytochrome c oxidase is the component of the respiratory chain that catalyzes the reduction of oxygen to water. Electrons originating from reduced cytochrome c in the intermembrane space (IMS) are transferred via the dinuclear copper A center (CU(A)) of subunit 2 and heme A of subunit 1 to the active site in subunit 1, a binuclear center (BNC) formed by heme A3 and copper B (CU(B)). The BNC reduces molecular oxygen to 2 water molecules using 4 electrons from cytochrome c in the IMS and 4 protons from the mitochondrial matrix. This chain is Cytochrome c oxidase subunit 3 (mt-co3), found in Tetraodon nigroviridis (Spotted green pufferfish).